The sequence spans 576 residues: Insulin-like growth factor 2 mRNA-binding protein 1 (576 aa).

2 consecutive RRM domains span residues 2-75 and 81-156; these read NKLY…HSVP and RKIQ…YIPD. A disordered region spans residues 158–189; the sequence is QSVQGPENGRRGGFGARGAPRQGSPVTAGAPV. KH domains follow at residues 195–260 and 276–343; these read DIPL…CKMI and EVPL…EQEI. Position 396 is a phosphotyrosine; by SRC (tyrosine 396). 2 consecutive KH domains span residues 404–469 and 486–552; these read QETV…QGRI and KLET…QRKI.

Belongs to the RRM IMP/VICKZ family. As to quaternary structure, can form homooligomers and heterooligomers with IGF2BP1 and IGF2BP3 in an RNA-dependent manner. Associates with the cytoskeleton, predominantly with actin filament bundles and occasionally with microtubules. In a heterologous system, interacts with ELAVL1, DHX9 and HNRNPU. Phosphorylated by SRC at Tyr-396. This residue is involved in ACTB mRNA binding, its phosphorylation impairs association with ACTB mRNA and hence abolishes translational repression. Phosphorylation occurs in close proximity to filopodia and in the growth cones of differentiated neuroglioblastoma cells. In terms of tissue distribution, expressed in neurons and embryonic fibroblasts (at protein level).

Its subcellular location is the nucleus. The protein resides in the cytoplasm. It localises to the perinuclear region. It is found in the P-body. The protein localises to the stress granule. Its subcellular location is the cell projection. The protein resides in the growth cone. It localises to the filopodium. It is found in the lamellipodium. Functionally, RNA-binding factor that recruits target transcripts to cytoplasmic protein-RNA complexes (mRNPs). This transcript 'caging' into mRNPs allows mRNA transport and transient storage. It also modulates the rate and location at which target transcripts encounter the translational apparatus and shields them from endonuclease attacks or microRNA-mediated degradation. Preferentially binds to N6-methyladenosine (m6A)-containing mRNAs and increases their stability. Plays a direct role in the transport and translation of transcripts required for axonal regeneration in adult sensory neurons. Regulates localized beta-actin/ACTB mRNA translation in polarized cells, a crucial process for cell migration and neurite outgrowth. Co-transcriptionally associates with the ACTB mRNA in the nucleus. This binding involves by a conserved 54-nucleotide element in the ACTB mRNA 3'-UTR, known as the 'zipcode'. The ribonucleoparticle (RNP) thus formed is exported to the cytoplasm, binds to a motor protein and is transported along the cytoskeleton to the cell periphery. During transport, IGF2BP1 prevents beta-actin mRNA from being translated into protein. When the RNP complex reaches its destination near the plasma membrane, IGF2BP1 is phosphorylated by SRC. This releases the mRNA, allowing ribosomal 40S and 60S subunits to assemble and initiate ACTB protein synthesis. The monomeric ACTB protein then assembles into the subcortical actin cytoskeleton, which pushes the leading edge onwards. Binds MYC mRNA. Binding to MYC mRNA is enhanced by m6A-modification of the CRD. Promotes the directed movement of cells by fine-tuning intracellular signaling networks. Binds to MAPK4 3'-UTR and inhibits its translation. Interacts with PTEN transcript open reading frame (ORF) and prevents mRNA decay. This combined action on MAPK4 (down-regulation) and PTEN (up-regulation) antagonizes HSPB1 phosphorylation, consequently it prevents G-actin sequestration by phosphorylated HSPB1, allowing F-actin polymerization. Hence enhances the velocity of cell migration and stimulates directed cell migration by PTEN-modulated polarization. In Gallus gallus (Chicken), this protein is Insulin-like growth factor 2 mRNA-binding protein 1 (IGF2BP1).